Reading from the N-terminus, the 390-residue chain is Protein NDRG4-A (390 aa).

The interval 356–390 is disordered; it reads LTSASSVDGSRPRPCTQSESSDGIGQINHTMEVSC. Residues 370-390 are compositionally biased toward polar residues; sequence CTQSESSDGIGQINHTMEVSC.

This sequence belongs to the NDRG family.

It is found in the cytoplasm. The protein localises to the cytosol. Functionally, contributes to the maintenance of intracerebral BDNF levels within the normal range. May enhance growth factor-induced ERK1 and ERK2 phosphorylation. May attenuate growth factor-promoted ELK1 phosphorylation in a microtubule-dependent manner. The polypeptide is Protein NDRG4-A (ndrg4-a) (Xenopus laevis (African clawed frog)).